A 1312-amino-acid chain; its full sequence is MASVKVAVRVRPMNRREKDLEAKFIIQMEKSKTTITNLKIPEGGTGDSGRERTKTFTYDFSFYSADTKSPDYVSQEMVFKTLGTDVVKSAFEGYNACVFAYGQTGSGKSYTMMGNSGDSGLIPRICEALFSRINETTRWDEASFRTEVSYLEIYNERVRDLLRRKSSKTFNLRVREHPKEGPYVEDLSKHLVQNYSDVEELMDAGNINRTTAATGMNDVSSRSHAIFTIKFTQAKFDAEMPCETVSKIHLVDLAGSERADATGATGVRLKEGGNINKSLVTLGNVISALADLSQDAANPLVKKKQVFVPYRDSVLTWLLKDSLGGNSKTIMIATISPADVNYGETLSTLRYANRAKNIINKPTINEDANVKLIRELRAEIARLKTLLAQGNQIALLDSPTALSMEEKLHQNEARVQELTKEWTNKWNETQNILKEQTLALRKEGIGVVLDSELPHLIGIDDDLLSTGIILYHLKEGQTYVGREDASTEQDIVLHGLDLESEHCVFENAGGTVTLIPLRGSQCSVNGVQIVDATQLNQGAVILLGRTNMFRFNHPKEAAKLREKRKSGLLSSFSLSMTDLSKSCENLSAVMLYNPGLEFERQQREELEKLESKRKLIEEMEEKQKSDKAELERMQQEVETRRKETEIVQRQIRKQEESLKRRSFHIENKLKDLLAEKERFEEERLREQQGLEQQRRQEEESLFRIREELRKLQELNSHEQAEKVQIFQELDRLHQEQNAQSAKLRLEKRRLEEEEKEQVQRVAHLEEQLRKRQDTAPLLCPGEAQRAQEEKRELESIREALLQAKEMRAGGDHTCRDELERAQQYFLEFKRRQLVKLASLEKDLVQQKDLLSKEVQEEKVALEHVKCDAGGDPSFLATDDGNILGGPPDLDKIKTAETRLQSREHQLQDLLQNHLPALLEEKQRVLDALDSGVLGLDTTLCQVEKEVGEKEEQIAQYQANASQLQQLRATFEFTANVARQEEKVRRKEKEILESQEKQQREALEQAVAKLEQRRSALQRCSTLDLEIQEQRQKLGSLHTSEWSGWQASLETDGEALEMDPARLEHEIHQLKQKICEVDGVQRPHHGILEGQAVLSSLPPSGGNSHLAPLMDARISAYIEEEVQRRLHDLHRAIGDANHTPADVMKSNEELHNGTTQRKLKYERMYSRSLGTNRDDLKDPIKISIPRYVLCGQGKDEHFEFEVKISVLDETWTVFRRYSRFREMHKTLKLKYAELAALEFPPKKLFGNKDERVVAERRTHLEKYLREFFSVMLQSETSPLHINKVGLTLSKHTICEFSPFFKKGVFDYSSHGTG.

In terms of domain architecture, Kinesin motor spans 3–358; that stretch reads SVKVAVRVRP…LRYANRAKNI (356 aa). 102–109 is a binding site for ATP; the sequence is GQTGSGKS. Residues 366–425 are a coiled coil; sequence EDANVKLIRELRAEIARLKTLLAQGNQIALLDSPTALSMEEKLHQNEARVQELTKEWTNK. The residue at position 398 (serine 398) is a Phosphoserine. The 65-residue stretch at 480–544 folds into the FHA domain; it reads VGREDASTEQ…LNQGAVILLG (65 aa). Residue threonine 577 is modified to Phosphothreonine. Residues serine 582, serine 838, serine 1047, and serine 1145 each carry the phosphoserine modification. 2 coiled-coil regions span residues 835-913 and 941-1073; these read KLAS…LQNH and QVEK…KQKI. Residues 1177 to 1291 form the PX domain; the sequence is DPIKISIPRY…KVGLTLSKHT (115 aa).

The protein belongs to the TRAFAC class myosin-kinesin ATPase superfamily. Kinesin family. As to quaternary structure, interacts with PTPN21. Interacts with RAB14.

The protein resides in the cytoplasm. It localises to the cytoskeleton. It is found in the early endosome membrane. Its subcellular location is the spindle. In terms of biological role, plus end-directed microtubule-dependent motor protein involved in endosome transport and receptor recycling and degradation. Regulates the plus end motility of early endosomes and the balance between recycling and degradation of receptors such as EGF receptor (EGFR) and FGF receptor (FGFR). Regulates the Golgi to endosome transport of FGFR-containing vesicles during early development, a key process for developing basement membrane and epiblast and primitive endoderm lineages during early postimplantation development. This Mus musculus (Mouse) protein is Kinesin-like protein KIF16B (Kif16b).